The following is a 171-amino-acid chain: uncharacterized protein (171 aa).

Residues 21-43 (GVAASLLILLAVYTIFQSTVVIA) form a helical membrane-spanning segment.

It is found in the membrane. This is an uncharacterized protein from Archaeoglobus fulgidus (strain ATCC 49558 / DSM 4304 / JCM 9628 / NBRC 100126 / VC-16).